Reading from the N-terminus, the 360-residue chain is Photosystem II protein D1 1 (360 aa).

3 helical membrane-spanning segments follow: residues 29–46 (YVGWFGVLMIPTLLAATV), 118–133 (HFLIGCACYLGRQWEL), and 142–156 (WICVAYSAPLASATA). His118 lines the chlorophyll a pocket. Tyr126 serves as a coordination point for pheophytin a. [CaMn4O5] cluster contacts are provided by Asp170 and Glu189. A helical transmembrane segment spans residues 197–218 (FHMLGVAGVFGGSLFSAMHGSL). Residue His198 coordinates chlorophyll a. Residues His215 and 264–265 (SF) contribute to the a quinone site. Fe cation is bound at residue His215. His272 serves as a coordination point for Fe cation. The chain crosses the membrane as a helical span at residues 274–288 (FLAAWPVIGIWFTAL). Residues His332, Glu333, Asp342, and Ala344 each coordinate [CaMn4O5] cluster. Residues 345–360 (AGEVAPVALTAPAING) constitute a propeptide that is removed on maturation.

The protein belongs to the reaction center PufL/M/PsbA/D family. PSII is composed of 1 copy each of membrane proteins PsbA, PsbB, PsbC, PsbD, PsbE, PsbF, PsbH, PsbI, PsbJ, PsbK, PsbL, PsbM, PsbT, PsbX, PsbY, PsbZ, Psb30/Ycf12, peripheral proteins PsbO, CyanoQ (PsbQ), PsbU, PsbV and a large number of cofactors. It forms dimeric complexes. The D1/D2 heterodimer binds P680, chlorophylls that are the primary electron donor of PSII, and subsequent electron acceptors. It shares a non-heme iron and each subunit binds pheophytin, quinone, additional chlorophylls, carotenoids and lipids. D1 provides most of the ligands for the Mn4-Ca-O5 cluster of the oxygen-evolving complex (OEC). There is also a Cl(-1) ion associated with D1 and D2, which is required for oxygen evolution. The PSII complex binds additional chlorophylls, carotenoids and specific lipids. is required as a cofactor. In terms of processing, tyr-161 forms a radical intermediate that is referred to as redox-active TyrZ, YZ or Y-Z. Post-translationally, C-terminally processed by CtpA; processing is essential to allow assembly of the oxygen-evolving complex and thus photosynthetic growth.

The protein localises to the cellular thylakoid membrane. The enzyme catalyses 2 a plastoquinone + 4 hnu + 2 H2O = 2 a plastoquinol + O2. Photosystem II (PSII) is a light-driven water:plastoquinone oxidoreductase that uses light energy to abstract electrons from H(2)O, generating O(2) and a proton gradient subsequently used for ATP formation. It consists of a core antenna complex that captures photons, and an electron transfer chain that converts photonic excitation into a charge separation. The D1/D2 (PsbA/PsbD) reaction center heterodimer binds P680, the primary electron donor of PSII as well as several subsequent electron acceptors. The chain is Photosystem II protein D1 1 from Nostoc sp. (strain PCC 7120 / SAG 25.82 / UTEX 2576).